Consider the following 289-residue polypeptide: LBH domain-containing protein 1 (289 aa).

Disordered stretches follow at residues 1-36 (MALV…PLWD) and 205-289 (EGAE…ASQD). Positions 1 to 128 (MALVPGRSKE…AEAFFQDQSE (128 aa)) constitute an LBH domain. The segment covering 15 to 25 (TRNSPGSSQHP) has biased composition (polar residues).

In terms of tissue distribution, expressed in bladder cancer tissues (at protein level).

This chain is LBH domain-containing protein 1, found in Homo sapiens (Human).